We begin with the raw amino-acid sequence, 1203 residues long: Metabotropic glutamate receptor 5 (1203 aa).

Residues 1–20 (MVLLLILSVLLLKEDVRGSA) form the signal peptide. Topologically, residues 21-579 (QSSERRVVAH…QYLRWGDPEP (559 aa)) are extracellular. Cysteines 57 and 99 form a disulfide. Tyr-64 contributes to the L-glutamate binding site. Asn-88 carries an N-linked (GlcNAc...) asparagine glycan. Residues Ser-151 and 172 to 174 (SAT) contribute to the L-glutamate site. Asn-209 is a glycosylation site (N-linked (GlcNAc...) asparagine). Tyr-222 provides a ligand contact to L-glutamate. Intrachain disulfides connect Cys-240–Cys-529, Cys-275–Cys-277, Cys-364–Cys-380, Cys-418–Cys-425, Cys-510–Cys-530, Cys-514–Cys-533, Cys-536–Cys-548, and Cys-551–Cys-564. Asp-304 contributes to the L-glutamate binding site. Residues Asn-377 and Asn-381 are each glycosylated (N-linked (GlcNAc...) asparagine). An L-glutamate-binding site is contributed by Lys-395. Asn-444 carries an N-linked (GlcNAc...) asparagine glycan. The helical transmembrane segment at 580–602 (IAAVVFACLGLLATLFVTVIFII) threads the bilayer. The Cytoplasmic portion of the chain corresponds to 603–612 (YRDTPVVKSS). The helical transmembrane segment at 613–635 (SRELCYIILAGICLGYLCTFCLI) threads the bilayer. At 636–643 (AKPKQIYC) the chain is on the extracellular side. A disulfide bond links Cys-643 and Cys-732. The chain crosses the membrane as a helical span at residues 644 to 666 (YLQRIGIGLSPAMSYSALVTKTN). Topologically, residues 667–692 (RIARILAGSKKKICTKKPRFMSACAQ) are cytoplasmic. A helical membrane pass occupies residues 693 to 713 (LVIAFILICIQLGIIVALFIM). The Extracellular segment spans residues 714–736 (EPPDIMHDYPSIREVYLICNTTN). Asn-733 is a glycosylation site (N-linked (GlcNAc...) asparagine). The chain crosses the membrane as a helical span at residues 737–758 (LGVVTPLGYNGLLILSCTFYAF). At 759-771 (KTRNVPANFNEAK) the chain is on the cytoplasmic side. Residues 772 to 794 (YIAFTMYTTCIIWLAFVPIYFGS) form a helical membrane-spanning segment. Topologically, residues 795–797 (NYK) are extracellular. The helical transmembrane segment at 798–819 (IITMCFSVSLSATVALGCMFVP) threads the bilayer. The Cytoplasmic portion of the chain corresponds to 820 to 1203 (KVYIILAKPE…RDYTQSSSSL (384 aa)). Position 860 is a phosphoserine (Ser-860). Arg-868 bears the Omega-N-methylarginine mark. Disordered regions lie at residues 892–970 (FTPK…GSGP), 1003–1054 (EESF…GSLM), and 1122–1182 (GAQG…ALCI). The segment covering 905-920 (TMSSSNGKSVTWAQNE) has biased composition (polar residues). Residue Arg-924 is modified to Omega-N-methylarginine. Over residues 1007 to 1017 (PAAARPRSPSP) the composition is skewed to low complexity. 2 positions are modified to phosphoserine: Ser-1014 and Ser-1016. Composition is skewed to polar residues over residues 1039-1054 (HSETAARSSSSQGSLM) and 1165-1176 (DSGSTTPNSPVS).

Belongs to the G-protein coupled receptor 3 family. In terms of assembly, interacts with RYR1, RYR2, ITPR1, SHANK1 and SHANK3. The PPXXF motif binds HOMER1, HOMER2 and HOMER3. Interacts with SIAH1 and TAMALIN. Interacts with NCDN. Interacts with NECAB2. Interacts with CAMK2A. Widely distributed in neuronal cells of the central nervous system.

The protein resides in the cell membrane. Functionally, G-protein coupled receptor for glutamate. Ligand binding causes a conformation change that triggers signaling via guanine nucleotide-binding proteins (G proteins) and modulates the activity of down-stream effectors. Signaling activates a phosphatidylinositol-calcium second messenger system and generates a calcium-activated chloride current. Plays an important role in the regulation of synaptic plasticity and the modulation of the neural network activity. This Rattus norvegicus (Rat) protein is Metabotropic glutamate receptor 5 (Grm5).